The chain runs to 177 residues: Large ribosomal subunit protein uL6 (177 aa).

This sequence belongs to the universal ribosomal protein uL6 family. In terms of assembly, part of the 50S ribosomal subunit.

Its function is as follows. This protein binds to the 23S rRNA, and is important in its secondary structure. It is located near the subunit interface in the base of the L7/L12 stalk, and near the tRNA binding site of the peptidyltransferase center. The polypeptide is Large ribosomal subunit protein uL6 (Sinorhizobium fredii (strain NBRC 101917 / NGR234)).